A 754-amino-acid polypeptide reads, in one-letter code: MAFSSCLKFYPFSISQAVTLTHHSFSLNLTPPSSTISFASPHSAALSSTDVKLLDSLRSQPDDSAALRLFNLASKKPNFSPEPALYEEILLRLGRSGSFDDMKKILEDMKSSRCEMGTSTFLILIESYAQFELQDEILSVVDWMIDEFGLKPDTHFYNRMLNLLVDGNSLKLVEISHAKMSVWGIKPDVSTFNVLIKALCRAHQLRPAILMLEDMPSYGLVPDEKTFTTVMQGYIEEGDLDGALRIREQMVEFGCSWSNVSVNVIVHGFCKEGRVEDALNFIQEMSNQDGFFPDQYTFNTLVNGLCKAGHVKHAIEIMDVMLQEGYDPDVYTYNSVISGLCKLGEVKEAVEVLDQMITRDCSPNTVTYNTLISTLCKENQVEEATELARVLTSKGILPDVCTFNSLIQGLCLTRNHRVAMELFEEMRSKGCEPDEFTYNMLIDSLCSKGKLDEALNMLKQMELSGCARSVITYNTLIDGFCKANKTREAEEIFDEMEVHGVSRNSVTYNTLIDGLCKSRRVEDAAQLMDQMIMEGQKPDKYTYNSLLTHFCRGGDIKKAADIVQAMTSNGCEPDIVTYGTLISGLCKAGRVEVASKLLRSIQMKGINLTPHAYNPVIQGLFRKRKTTEAINLFREMLEQNEAPPDAVSYRIVFRGLCNGGGPIREAVDFLVELLEKGFVPEFSSLYMLAEGLLTLSMEETLVKLVNMVMQKARFSEEEVSMVKGLLKIRKFQDALATLGGVLDSRQPRRTYRSR.

The N-terminal 72 residues, 1–72 (MAFSSCLKFY…DSAALRLFNL (72 aa)), are a transit peptide targeting the chloroplast. PPR repeat units follow at residues 82–116 (EPAL…RCEM), 117–152 (GTST…GLKP), 153–187 (DTHF…GIKP), 188–222 (DVST…GLVP), 223–257 (DEKT…GCSW), 258–288 (SNVS…MSNQ), 294–328 (DQYT…GYDP), 329–363 (DVYT…DCSP), 364–398 (NTVT…GILP), 399–433 (DVCT…GCEP), 434–468 (DEFT…GCAR), 469–503 (SVIT…GVSR), 504–538 (NSVT…GQKP), 539–573 (DKYT…GCEP), 574–608 (DIVT…GINL), 609–643 (TPHA…NEAP), and 645–680 (DAVS…GFVP).

This sequence belongs to the PPR family. P subfamily.

The protein localises to the plastid. It is found in the chloroplast. May be involved in female gametophyte development. The sequence is that of Pentatricopeptide repeat-containing protein At3g53700, chloroplastic (MEE40) from Arabidopsis thaliana (Mouse-ear cress).